A 95-amino-acid polypeptide reads, in one-letter code: L-amino-acid oxidase (95 aa).

Belongs to the flavin monoamine oxidase family. FIG1 subfamily. In terms of assembly, homodimer; non-covalently linked. The cofactor is FAD. In terms of processing, N-glycosylated. Expressed by the venom gland.

Its subcellular location is the secreted. The enzyme catalyses an L-alpha-amino acid + O2 + H2O = a 2-oxocarboxylate + H2O2 + NH4(+). It catalyses the reaction L-leucine + O2 + H2O = 4-methyl-2-oxopentanoate + H2O2 + NH4(+). It carries out the reaction L-phenylalanine + O2 + H2O = 3-phenylpyruvate + H2O2 + NH4(+). The catalysed reaction is L-tryptophan + O2 + H2O = indole-3-pyruvate + H2O2 + NH4(+). The enzyme catalyses L-methionine + O2 + H2O = 4-methylsulfanyl-2-oxobutanoate + H2O2 + NH4(+). It catalyses the reaction L-arginine + O2 + H2O = 5-guanidino-2-oxopentanoate + H2O2 + NH4(+). Functionally, catalyzes an oxidative deamination of predominantly hydrophobic and aromatic L-amino acids, thus producing hydrogen peroxide that may contribute to the diverse toxic effects of this enzyme. Is highly active on L-Met, L-Leu, L-Phe, L-Trp, and L-Arg, and no weakly or no active on L-His, L-Tyr, L-Ile, L-Gln, and L-Lys. Exhibits diverse biological activities, such as antibacterial activity against both Gram-positive (B.subtilis) and Gram-negative (E.coli) bacteria, and inhibition of ADP- or collagen-induced platelet aggregation. Effects of snake L-amino oxidases on platelets are controversial, since they either induce aggregation or inhibit agonist-induced aggregation. These different effects are probably due to different experimental conditions. This protein may also induce hemorrhage, hemolysis, edema, apoptosis, and have antiparasitic activities. The chain is L-amino-acid oxidase from Naja oxiana (Central Asian cobra).